We begin with the raw amino-acid sequence, 831 residues long: Multiphosphoryl transfer protein (831 aa).

Positions methionine 1–serine 90 constitute an HPr domain. Histidine 15 functions as the Pros-phosphohistidine intermediate; for HPr activity in the catalytic mechanism. Histidine 15 is modified (phosphohistidine; by EI). The tract at residues glycine 119–aspartate 650 is PTS EI. Residue histidine 298 is the Tele-phosphohistidine intermediate; for PTS EI activity of the active site. Histidine 298 carries the phosphohistidine; by autocatalysis modification. Residues arginine 405 and arginine 441 each contribute to the phosphoenolpyruvate site. Mg(2+) contacts are provided by glutamate 540 and aspartate 564. Phosphoenolpyruvate is bound by residues asparagine 563–aspartate 564 and arginine 574. Cysteine 611 serves as the catalytic Proton donor; for EI activity. The 144-residue stretch at proline 685–glutamate 828 folds into the PTS EIIA type-2 domain. The active-site Tele-phosphohistidine intermediate; for PTS EIIA activity is the histidine 747. At histidine 747 the chain carries Phosphohistidine; by HPr.

Belongs to the PEP-utilizing enzyme family. It depends on Mg(2+) as a cofactor.

Its subcellular location is the cytoplasm. It catalyses the reaction L-histidyl-[protein] + phosphoenolpyruvate = N(pros)-phospho-L-histidyl-[protein] + pyruvate. It carries out the reaction D-fructose(out) + N(pros)-phospho-L-histidyl-[protein] = D-fructose 1-phosphate(in) + L-histidyl-[protein]. In terms of biological role, multifunctional protein that includes general (non sugar-specific) and sugar-specific components of the phosphoenolpyruvate-dependent sugar phosphotransferase system (sugar PTS). This major carbohydrate active transport system catalyzes the phosphorylation of incoming sugar substrates concomitantly with their translocation across the cell membrane. The enzyme II FryABC PTS system is involved in fructose transport. The protein is Multiphosphoryl transfer protein (fryA) of Escherichia coli O6:H1 (strain CFT073 / ATCC 700928 / UPEC).